A 79-amino-acid chain; its full sequence is MTNWDPNHPSLRSPIAPHETACVLRMHRAGYKGRATMKILKLRGTRLMNQMQRALDAETHAARAGRPIHDALIDPKKVK.

A disordered region spans residues 58–79 (ETHAARAGRPIHDALIDPKKVK).

The sequence is that of Gene 68 protein (68) from Mycobacterium (Mycobacteriophage L5).